Reading from the N-terminus, the 267-residue chain is MSIEYSVIVPAYHEKLNIKPLTTRLFAGMSPEMAKKTELIFVDDNSQDGSVEEVDALAHQGYNVRIIVRTNERGLSSAVLKGFYEAKGQYLVCMDADLQHPPETVPKLFESLHDHAFTLGTRYAPGVGIDKDWPMYRRVISSTARMMARPLTIASDPMSGFFGLQKKYLENCNPRDINSQGFKIALELLAKLPLPRDPRVAIGEVPFTFGVRTEGESKLSGKVIIQYLQQLKELYVFKFGANNLILFITFWSILFFYVCYQLYHLVF.

N-acetylserine is present on Ser-2. Over 2-238 (SIEYSVIVPA…QQLKELYVFK (237 aa)) the chain is Cytoplasmic. 10 residues coordinate GDP-alpha-D-mannose: Pro-10, Tyr-12, Glu-14, Val-42, Asp-44, Asp-95, Ala-96, Asp-97, Gln-99, and Arg-122. Mg(2+) contacts are provided by Asp-97 and Gln-99. Mn(2+) is bound by residues Asp-97 and Gln-99. Ser-141 is subject to Phosphoserine; by PKA. Lys-183, Arg-212, and Lys-218 together coordinate GDP-alpha-D-mannose. Residues 239–259 (FGANNLILFITFWSILFFYVC) form a helical; Anchor for type IV membrane protein membrane-spanning segment. The Lumenal portion of the chain corresponds to 260–267 (YQLYHLVF).

Belongs to the glycosyltransferase 2 family. In terms of assembly, interacts with the C-terminus of SAC1, thereby sequestering it to the endoplasmic reticulum in exponentially growing cells. Under nutrient limitation conditions, this interaction is rapidly abolished. Mg(2+) serves as cofactor. Mn(2+) is required as a cofactor. The cofactor is Ca(2+).

It localises to the endoplasmic reticulum membrane. The catalysed reaction is a di-trans,poly-cis-dolichyl phosphate + GDP-alpha-D-mannose = a di-trans,poly-cis-dolichyl beta-D-mannosyl phosphate + GDP. It functions in the pathway protein modification; protein glycosylation. Its activity is regulated as follows. Inhibited by acetylsalicylic acid (aspirin). Transfers mannose from GDP-mannose to dolichol monophosphate to form dolichol phosphate mannose (Dol-P-Man) which is the mannosyl donor in pathways leading to N-glycosylation, glycosyl phosphatidylinositol membrane anchoring, and O-mannosylation of proteins. The chain is Dolichol-phosphate mannosyltransferase from Saccharomyces cerevisiae (strain ATCC 204508 / S288c) (Baker's yeast).